A 226-amino-acid polypeptide reads, in one-letter code: Beta-phosphoglucomutase (226 aa).

Catalysis depends on Asp-7, which acts as the Nucleophile. Asp-7 and Asp-9 together coordinate Mg(2+). 4-aspartylphosphate is present on Asp-7. Asp-9 acts as the Proton donor/acceptor in catalysis. Beta-D-glucose 6-phosphate contacts are provided by Asp-9, Gly-44, Ile-45, Arg-47, Ser-116, Arg-117, and Asn-118. Asp-170 serves as a coordination point for Mg(2+).

It belongs to the HAD-like hydrolase superfamily. CbbY/CbbZ/Gph/YieH family. Homodimer. Mg(2+) serves as cofactor. Post-translationally, autophosphorylated.

It is found in the cytoplasm. It carries out the reaction beta-D-glucose 1-phosphate = beta-D-glucose 6-phosphate. In terms of biological role, catalyzes the interconversion of D-glucose 1-phosphate (G1P) and D-glucose 6-phosphate (G6P), forming beta-D-glucose 1,6-(bis)phosphate (beta-G16P) as an intermediate. The sequence is that of Beta-phosphoglucomutase (yvdM) from Bacillus subtilis (strain 168).